Consider the following 117-residue polypeptide: Small ribosomal subunit protein eS25 (117 aa).

Residues 1–34 form a disordered region; sequence MPPKKDPKGGKAPPSKKKEGSGGGKAKKKKWSKG. Residues 25–34 show a composition bias toward basic residues; it reads KAKKKKWSKG.

This sequence belongs to the eukaryotic ribosomal protein eS25 family.

This is Small ribosomal subunit protein eS25 (rps-25) from Caenorhabditis elegans.